A 754-amino-acid chain; its full sequence is ATP-dependent zinc metalloprotease FtsH (754 aa).

The Cytoplasmic segment spans residues 1–9; that stretch reads MKQRMKKPS. A helical transmembrane segment spans residues 10–30; sequence LGTFILILILIGILAYVLWQF. At 31-186 the chain is on the extracellular side; it reads LSPKLGYKSL…FDRPRGNFLS (156 aa). A helical membrane pass occupies residues 187-207; it reads SFIVPYIPFLLISLFGFWLFF. Topologically, residues 208-754 are cytoplasmic; sequence RLSQNSQAGG…ESKIDSSKEQ (547 aa). 277–284 serves as a coordination point for ATP; the sequence is GPPGTGKT. Histidine 499 serves as a coordination point for Zn(2+). The active site involves glutamate 500. Positions 503 and 577 each coordinate Zn(2+). The interval 713 to 754 is disordered; the sequence is QEKSYENEDQNQNSLEAINYNIDDQDDDKNDSESKIDSSKEQ. Residues 743-754 are compositionally biased toward basic and acidic residues; sequence DSESKIDSSKEQ.

The protein in the central section; belongs to the AAA ATPase family. This sequence in the C-terminal section; belongs to the peptidase M41 family. In terms of assembly, homohexamer. The cofactor is Zn(2+).

It is found in the cell membrane. Functionally, acts as a processive, ATP-dependent zinc metallopeptidase for both cytoplasmic and membrane proteins. Plays a role in the quality control of integral membrane proteins. This Mesomycoplasma conjunctivae (strain ATCC 25834 / NCTC 10147 / HRC/581) (Mycoplasma conjunctivae) protein is ATP-dependent zinc metalloprotease FtsH.